Here is a 292-residue protein sequence, read N- to C-terminus: MRGYLFGILSAVFWALSGLLYNELPLSEYTALGKVISLLFLIDFCSLLVIGITLWRKSAVDFQGVFWQPALSGILGGPIGMSAYLLSIHYLTIYYAAPLSSLFPVFAALMSYWILKEKITKTAQFGFALAIISSSLLAIEVGQEITFNTIGFIFLIICILGWSSEIVISSYTMRSLSGLQVYFLRLCGSTIGYLLILFILSLKNFSLDILSFNYVQIAGVIIFGALSYCCYYQAIYLLKPIKAMALNITYSVWAIGLGYLLYKQPIKPITLLLTLLLSAGVIVTLYYKGEQK.

2 EamA domains span residues 70 to 139 (ALSG…LLAI) and 160 to 286 (LGWS…VTLY).

This Haemophilus influenzae (strain ATCC 51907 / DSM 11121 / KW20 / Rd) protein is Protein LicB (licB).